We begin with the raw amino-acid sequence, 456 residues long: Phospholipase A1 member A (456 aa).

Residues 1-24 (MCPGLWGTCFWLWGSLLWLSIGRS) form the signal peptide. Ser166 (nucleophile) is an active-site residue. Asp190 functions as the Charge relay system in the catalytic mechanism. Cys245 and Cys258 are disulfide-bonded. Residue His260 is the Charge relay system of the active site. 2 disulfides stabilise this stretch: Cys282–Cys293 and Cys296–Cys304. Asn365 carries N-linked (GlcNAc...) asparagine glycosylation.

The protein belongs to the AB hydrolase superfamily. Lipase family.

The protein localises to the secreted. The enzyme catalyses a 1,2-diacyl-sn-glycero-3-phospho-L-serine + H2O = a 2-acyl-sn-glycero-3-phospho-L-serine + a fatty acid + H(+). It catalyses the reaction 1,2-di-(9Z)-octadecenoyl-sn-glycero-3-phospho-L-serine + H2O = 2-(9Z-octadecenoyl)-sn-glycero-3-phospho-L-serine + (9Z)-octadecenoate + H(+). It carries out the reaction 1-hexadecanoyl-2-(5Z,8Z,11Z,14Z-eicosatetraenoyl)-sn-glycero-3-phospho-L-serine + H2O = 2-(5Z,8Z,11Z,14Z)-eicosatetraenoyl-sn-glycero-3-phospho-L-serine + hexadecanoate + H(+). The catalysed reaction is a 1-acyl-sn-glycero-3-phospho-L-serine + H2O = sn-glycero-3-phospho-L-serine + a fatty acid + H(+). The enzyme catalyses 1-(9Z-octadecenoyl)-sn-glycero-3-phospho-L-serine + H2O = sn-glycero-3-phospho-L-serine + (9Z)-octadecenoate + H(+). Its function is as follows. Hydrolyzes the ester bond of the acyl group attached at the sn-1 position of phosphatidylserines (phospholipase A1 activity) and 1-acyl-2-lysophosphatidylserines (lysophospholipase activity) in the pathway of phosphatidylserines acyl chain remodeling. Cleaves phosphatidylserines exposed on the outer leaflet of the plasma membrane of apoptotic cells producing 2-acyl-1-lysophosphatidylserines, which in turn enhance mast cell activation and histamine production. Has no activity toward other glycerophospholipids including phosphatidylcholines, phosphatidylethanolamines, phosphatidic acids or phosphatidylinositols, or glycerolipids such as triolein. This is Phospholipase A1 member A from Rattus norvegicus (Rat).